The primary structure comprises 872 residues: Valine--tRNA ligase (872 aa).

Residues 49–59 (PNVTGILHIGH) carry the 'HIGH' region motif. Residues 531–535 (KMSKS) carry the 'KMSKS' region motif. Residue Lys-534 coordinates ATP. Residues 810 to 871 (PLIARLKKQL…IQQELDLLEQ (62 aa)) are a coiled coil.

This sequence belongs to the class-I aminoacyl-tRNA synthetase family. ValS type 1 subfamily. Monomer.

It is found in the cytoplasm. The enzyme catalyses tRNA(Val) + L-valine + ATP = L-valyl-tRNA(Val) + AMP + diphosphate. Its function is as follows. Catalyzes the attachment of valine to tRNA(Val). As ValRS can inadvertently accommodate and process structurally similar amino acids such as threonine, to avoid such errors, it has a 'posttransfer' editing activity that hydrolyzes mischarged Thr-tRNA(Val) in a tRNA-dependent manner. In Helicobacter pylori (strain J99 / ATCC 700824) (Campylobacter pylori J99), this protein is Valine--tRNA ligase.